A 185-amino-acid chain; its full sequence is Ribosome-recycling factor (185 aa).

It belongs to the RRF family.

It localises to the cytoplasm. In terms of biological role, responsible for the release of ribosomes from messenger RNA at the termination of protein biosynthesis. May increase the efficiency of translation by recycling ribosomes from one round of translation to another. The chain is Ribosome-recycling factor from Methylobacillus flagellatus (strain ATCC 51484 / DSM 6875 / VKM B-1610 / KT).